Reading from the N-terminus, the 315-residue chain is Methionyl-tRNA formyltransferase (315 aa).

112–115 (SLLP) is a binding site for (6S)-5,6,7,8-tetrahydrofolate.

This sequence belongs to the Fmt family.

It carries out the reaction L-methionyl-tRNA(fMet) + (6R)-10-formyltetrahydrofolate = N-formyl-L-methionyl-tRNA(fMet) + (6S)-5,6,7,8-tetrahydrofolate + H(+). Functionally, attaches a formyl group to the free amino group of methionyl-tRNA(fMet). The formyl group appears to play a dual role in the initiator identity of N-formylmethionyl-tRNA by promoting its recognition by IF2 and preventing the misappropriation of this tRNA by the elongation apparatus. This is Methionyl-tRNA formyltransferase from Rhizobium rhizogenes (strain K84 / ATCC BAA-868) (Agrobacterium radiobacter).